The following is a 326-amino-acid chain: MSSFSESALEKKLSELSNSQQSVQTLSLWLIHHRKHAGPIVSVWHRELRKAKSNRKLTFLYLANDVIQNSKRKGPEFTREFESVLVDAFSHVAREADEGCKKPLERLLNIWQERSVYGGEFIQQLKLSMEDSKSPPPKAAEEKKSLKRTFQQIQEEEDDDYPGSYSPQDPSAGPLLTEELIKALQDLENAASGDATVRQKIASLPQEVQDVSLLEKITDKEAAERLSKTVDEACLLLAEYNGRLAAELEDRRQLARMLVEYTQNQKEVLSEKEKKLEEYKQKLARVTQVRKELKSHIQSLPDLSLLPNVTGGLAPLPSAGDLFSTD.

Serine 2 is modified (N-acetylserine). The CID domain maps to 2–133 (SSFSESALEK…QLKLSMEDSK (132 aa)). A compositionally biased stretch (basic and acidic residues) spans 128-144 (SMEDSKSPPPKAAEEKK). The interval 128-148 (SMEDSKSPPPKAAEEKKSLKR) is disordered. Residues serine 132 and serine 134 each carry the phosphoserine modification. The residue at position 161 (tyrosine 161) is a Phosphotyrosine. 2 positions are modified to phosphoserine: serine 166 and serine 299.

This sequence belongs to the UPF0400 (RTT103) family. As to quaternary structure, homodimer. May form a heterodimer with RPRD1A. Associates with RPAP2. Associates with the RNA polymerase II complex. In terms of tissue distribution, widely expressed in the adult with highest levels in liver, colon, prostate and uterus and lowest levels in heart and kidney. Not detected in rectum.

The protein resides in the nucleus. In terms of biological role, interacts with phosphorylated C-terminal heptapeptide repeat domain (CTD) of the largest RNA polymerase II subunit POLR2A, and participates in dephosphorylation of the CTD by RPAP2. Transcriptional regulator which enhances expression of CCND1. Promotes binding of RNA polymerase II to the CCDN1 promoter and to the termination region before the poly-A site but decreases its binding after the poly-A site. Prevents RNA polymerase II from reading through the 3' end termination site and may allow it to be recruited back to the promoter through promotion of the formation of a chromatin loop. Also enhances the transcription of a number of other cell cycle-related genes including CDK2, CDK4, CDK6 and cyclin-E but not CDKN1A, CDKN1B or cyclin-A. Promotes cell proliferation. In Mus musculus (Mouse), this protein is Regulation of nuclear pre-mRNA domain-containing protein 1B (Rprd1b).